A 372-amino-acid chain; its full sequence is MDRGIDLQGTFIQSLESLGLSPGLSKVLWMPLPMLLMIIAATVGVLVTVWLERKISAAVQQRIGPEYAGPLGVLQSAADGLKLILKEDIIPAKADAFLFTIGPALVVIPVFLSYLIVPFGQELIITNVGAGVFLWIALSSIQPIGLLMSGYASNNKYSLLGGLRAAAQSISYEIPLALAVLAVVMMSNSLSTIDIVDQQSGYGILGWNIWRQPVGFIIFWIAALAECERLPFDLPEAEEELVAGYQTEYAGMKFALFYVGSYVNLILSALLVSILYLGGWEFPIPLDRVADWIGVDPANPILQITTAALGITMTVLKAYLLVFTAILLRWTVPRVRIDQLLDLGWKFLLPISLVNLLVTAALKLTFPVAFGG.

Transmembrane regions (helical) follow at residues 27–47, 97–117, 128–148, 176–196, 204–224, 254–274, 308–328, and 347–367; these read VLWM…GVLV, FLFT…YLIV, VGAG…GLLM, LALA…IDIV, ILGW…IAAL, FALF…LVSI, ALGI…AILL, and FLLP…LTFP.

It belongs to the complex I subunit 1 family. As to quaternary structure, NDH-1 is composed of at least 11 different subunits.

It localises to the cellular thylakoid membrane. The catalysed reaction is a plastoquinone + NADH + (n+1) H(+)(in) = a plastoquinol + NAD(+) + n H(+)(out). It catalyses the reaction a plastoquinone + NADPH + (n+1) H(+)(in) = a plastoquinol + NADP(+) + n H(+)(out). NDH-1 shuttles electrons from an unknown electron donor, via FMN and iron-sulfur (Fe-S) centers, to quinones in the respiratory and/or the photosynthetic chain. The immediate electron acceptor for the enzyme in this species is believed to be plastoquinone. Couples the redox reaction to proton translocation, and thus conserves the redox energy in a proton gradient. The protein is NAD(P)H-quinone oxidoreductase subunit 1 of Synechococcus elongatus (strain ATCC 33912 / PCC 7942 / FACHB-805) (Anacystis nidulans R2).